We begin with the raw amino-acid sequence, 782 residues long: Anoctamin-9 (782 aa).

Topologically, residues 1–198 (MQGEESLRIL…LYFVWLGWYT (198 aa)) are cytoplasmic. The helical transmembrane segment at 199–219 (YMLVPAALTGLLVFLSGFSLF) threads the bilayer. The Extracellular segment spans residues 220–264 (EASQISKEICEAHDILMCPLGDHSRRYQRLSETCTFAKLTHLFDN). Ser-250 carries the phosphoserine; by PKA modification. The chain crosses the membrane as a helical span at residues 265–285 (DGTVVFAIFMALWATVFLEIW). At 286-331 (KRQRARVVLHWDLYVWDEEQEEMALQLINCPDYKLRPYQHSYLRST) the chain is on the cytoplasmic side. A helical membrane pass occupies residues 332–352 (VILVLTLLMICLMIGMAHVLV). The Extracellular segment spans residues 353 to 373 (VYRVLASALFSSSAVPFLEEQ). The helical transmembrane segment at 374–394 (VTTAVVVTGALVHYVTIIIMT) threads the bilayer. Topologically, residues 395–423 (KINRCVALKLCDFEMPRTFSERESRFTIR) are cytoplasmic. The helical transmembrane segment at 424-444 (FFTLQFFTHFSSLIYIAFILG) threads the bilayer. The Extracellular segment spans residues 445–552 (RINGHPGKST…EMMIQYGFTT (108 aa)). Residues 553–573 (IFVAAFPLAPLLALFSNLVEI) form a helical membrane-spanning segment. The Cytoplasmic portion of the chain corresponds to 574 to 604 (RLDAIKMVWLQRRLVPRKAKDIGTWLQVLET). Residues 605–625 (IGVLAVIANGMVIAFTSEFIP) form a helical membrane-spanning segment. The Extracellular portion of the chain corresponds to 626 to 703 (RVVYKYRYSP…QFWFLLAIRL (78 aa)). Asn-641, Asn-652, Asn-674, and Asn-690 each carry an N-linked (GlcNAc...) asparagine glycan. Residues 704–724 (AFVILFEHVALCIKLIAAWFV) form a helical membrane-spanning segment. The Cytoplasmic segment spans residues 725–782 (PDIPQSVKNKVLEVKYQRLREKMWHGRQRLGGVGAGSRPPMPAHPTPASIFSARSTDV). The segment at 756–782 (GVGAGSRPPMPAHPTPASIFSARSTDV) is disordered.

This sequence belongs to the anoctamin family. In terms of processing, phosphorylated on serine residues by cAMP-dependent protein kinase A (PKA) which is essential for activation of its cation channel activity. Expressed in the kidney. Expressed in the olfactory epithelium.

The protein localises to the cell membrane. It localises to the endoplasmic reticulum. The enzyme catalyses a 1,2-diacyl-sn-glycero-3-phospho-L-serine(in) = a 1,2-diacyl-sn-glycero-3-phospho-L-serine(out). It carries out the reaction a beta-D-galactosyl-(1&lt;-&gt;1')-N-acylsphing-4-enine(out) = a beta-D-galactosyl-(1&lt;-&gt;1')-N-acylsphing-4-enine(in). The catalysed reaction is a 1,2-diacyl-sn-glycero-3-phosphocholine(in) = a 1,2-diacyl-sn-glycero-3-phosphocholine(out). It catalyses the reaction Ca(2+)(in) = Ca(2+)(out). The enzyme catalyses Na(+)(in) = Na(+)(out). It carries out the reaction K(+)(in) = K(+)(out). Cation channel activity is activated via phosphorylation on serine residues by cAMP-dependent protein kinase A (PKA). In terms of biological role, PKA-activated nonselective cation channel. Discriminates poorly among cations but is more permeable to Ca(2+) ions than to monovalent cations. Acts as a calcium-activated calcium permeable channel which may operate as a endoplasmic reticulum (ER) Ca(2+)-leak channel, reducing the loading of the ER Ca(2+) store. Regulates intracellular Ca2+ signals, ion channel activity, and cytokine release in the renal tissue. Plays an important role in olfaction, amplifying cAMP-evoked cyclic nucleotide-gated (CNG) channel currents in the olfactory sensory neurons. Has calcium-dependent phospholipid scramblase activity; scrambles phosphatidylserine, phosphatidylcholine and galactosylceramide. Does not exhibit calcium-activated chloride channel (CaCC) activity. Can inhibit the activity of ANO1. This Homo sapiens (Human) protein is Anoctamin-9 (ANO9).